The following is a 306-amino-acid chain: Low-density lipoprotein receptor class A domain-containing protein 4 (306 aa).

The Lumenal segment spans residues 1 to 64 (MPEAGFQATN…PPGIFNSELE (64 aa)). One can recognise an LDL-receptor class A domain in the interval 11-48 (AFTECKFTCTSGKCLYLGSLVCNQQNDCGDNSDEENCL). Disulfide bonds link C19/C38 and C32/C47. Residues 65–85 (FAQILIIVVVVTVMVVVVVCL) form a helical membrane-spanning segment. Residues 86–306 (LNHYKVSTRS…GKDRKPGDLV (221 aa)) are Cytoplasmic-facing. A disordered region spans residues 100-127 (PNQSQRQEDGLQPEGSLWPSDSSVQRPG). The short motif at 180 to 183 (PPPY) is the PPxY motif 1 element. Positions 208–211 (PPNR) match the SMAD interaction motif (SIM) motif. A PPxY motif 2 motif is present at residues 252–255 (PPTY). The tract at residues 268 to 306 (FHHQHSNTHRGSRPQFQPNNSEGTIVPIKGKDRKPGDLV) is disordered. Basic residues predominate over residues 269–279 (HHQHSNTHRGS). A compositionally biased stretch (polar residues) spans 281–290 (PQFQPNNSEG). Basic and acidic residues predominate over residues 296–306 (KGKDRKPGDLV).

The protein belongs to the PMEPA1 family. As to quaternary structure, interacts with PMEPA1. Interacts (via the SMAD interaction motif) with SMAD2 and SMAD3. As to expression, detected in all tissues tested.

Its subcellular location is the early endosome membrane. Functionally, functions as a negative regulator of TGF-beta signaling and thereby probably plays a role in cell proliferation, differentiation, apoptosis, motility, extracellular matrix production and immunosuppression. In the canonical TGF-beta pathway, ZFYVE9/SARA recruits the intracellular signal transducer and transcriptional modulators SMAD2 and SMAD3 to the TGF-beta receptor. Phosphorylated by the receptor, SMAD2 and SMAD3 then form a heteromeric complex with SMAD4 that translocates to the nucleus to regulate transcription. Through interaction with SMAD2 and SMAD3, LDLRAD4 may compete with ZFYVE9 and SMAD4 and prevent propagation of the intracellular signal. The sequence is that of Low-density lipoprotein receptor class A domain-containing protein 4 (Ldlrad4) from Mus musculus (Mouse).